The sequence spans 77 residues: MDREQRIKEIIADQLGVEVDKLTPDAKFVEDLGADSLDVVELIMSFEEEFNIEIPDEDAEKIKTVGDVINYLNEKLK.

A Carrier domain is found at 1-76 (MDREQRIKEI…DVINYLNEKL (76 aa)). S36 bears the O-(pantetheine 4'-phosphoryl)serine mark.

The protein belongs to the acyl carrier protein (ACP) family. Post-translationally, 4'-phosphopantetheine is transferred from CoA to a specific serine of apo-ACP by AcpS. This modification is essential for activity because fatty acids are bound in thioester linkage to the sulfhydryl of the prosthetic group.

It is found in the cytoplasm. The protein operates within lipid metabolism; fatty acid biosynthesis. Functionally, carrier of the growing fatty acid chain in fatty acid biosynthesis. This chain is Acyl carrier protein, found in Hydrogenobaculum sp. (strain Y04AAS1).